Here is a 279-residue protein sequence, read N- to C-terminus: Small ribosomal subunit protein uS2 (279 aa).

Residues 232–260 (KVDMEAAGENAPKGAGKKKNTKARMDKAE) are disordered.

The protein belongs to the universal ribosomal protein uS2 family.

The sequence is that of Small ribosomal subunit protein uS2 from Phocaeicola vulgatus (strain ATCC 8482 / DSM 1447 / JCM 5826 / CCUG 4940 / NBRC 14291 / NCTC 11154) (Bacteroides vulgatus).